The primary structure comprises 163 residues: Nucleotide-binding protein BBR47_25280 (163 aa).

It belongs to the YajQ family.

Functionally, nucleotide-binding protein. This Brevibacillus brevis (strain 47 / JCM 6285 / NBRC 100599) protein is Nucleotide-binding protein BBR47_25280.